The chain runs to 130 residues: Small ribosomal subunit protein uS9 (130 aa).

The segment at 109-130 is disordered; the sequence is RKKERKKYGQRAARARFQYSKR.

The protein belongs to the universal ribosomal protein uS9 family.

The chain is Small ribosomal subunit protein uS9 from Oleidesulfovibrio alaskensis (strain ATCC BAA-1058 / DSM 17464 / G20) (Desulfovibrio alaskensis).